Consider the following 451-residue polypeptide: Probable phosphoglucosamine mutase (451 aa).

The active-site Phosphoserine intermediate is serine 96. Mg(2+) contacts are provided by serine 96, aspartate 233, aspartate 235, and aspartate 237. At serine 96 the chain carries Phosphoserine.

It belongs to the phosphohexose mutase family. It depends on Mg(2+) as a cofactor. In terms of processing, activated by phosphorylation.

The enzyme catalyses alpha-D-glucosamine 1-phosphate = D-glucosamine 6-phosphate. Its function is as follows. Catalyzes the conversion of glucosamine-6-phosphate to glucosamine-1-phosphate. In Pyrococcus horikoshii (strain ATCC 700860 / DSM 12428 / JCM 9974 / NBRC 100139 / OT-3), this protein is Probable phosphoglucosamine mutase.